A 512-amino-acid polypeptide reads, in one-letter code: Serine palmitoyltransferase 3 (512 aa).

K345 is subject to N6-(pyridoxal phosphate)lysine.

The protein belongs to the class-II pyridoxal-phosphate-dependent aminotransferase family. As to quaternary structure, heterodimer of sptl-1/sptl-3. The cofactor is pyridoxal 5'-phosphate.

It catalyses the reaction L-serine + hexadecanoyl-CoA + H(+) = 3-oxosphinganine + CO2 + CoA. Its pathway is lipid metabolism; sphingolipid metabolism. Its function is as follows. Component of the serine palmitoyltransferase (SPT) that catalyzes the first committed step in sphingolipid biosynthesis, which is the condensation of an acyl-CoA species and L-serine. The catalytic core is composed of a heterodimer of sptl-1 and sptl-2 or sptl-1 and sptl-3. Required for the specification of abicobasal polarity and development of the gut lumen. The polypeptide is Serine palmitoyltransferase 3 (sptl-3) (Caenorhabditis elegans).